Reading from the N-terminus, the 472-residue chain is Uronate isomerase (472 aa).

Belongs to the metallo-dependent hydrolases superfamily. Uronate isomerase family.

The enzyme catalyses D-glucuronate = D-fructuronate. It catalyses the reaction aldehydo-D-galacturonate = keto-D-tagaturonate. It participates in carbohydrate metabolism; pentose and glucuronate interconversion. The sequence is that of Uronate isomerase from Nostoc punctiforme (strain ATCC 29133 / PCC 73102).